The chain runs to 247 residues: ATP synthase subunit a, chloroplastic (247 aa).

5 helical membrane passes run glutamine 38–valine 58, valine 95–leucine 115, isoleucine 134–serine 154, leucine 199–leucine 219, and glycine 220–glycine 240.

Belongs to the ATPase A chain family. As to quaternary structure, F-type ATPases have 2 components, CF(1) - the catalytic core - and CF(0) - the membrane proton channel. CF(1) has five subunits: alpha(3), beta(3), gamma(1), delta(1), epsilon(1). CF(0) has four main subunits: a, b, b' and c.

The protein resides in the plastid. The protein localises to the chloroplast thylakoid membrane. Its function is as follows. Key component of the proton channel; it plays a direct role in the translocation of protons across the membrane. In Cicer arietinum (Chickpea), this protein is ATP synthase subunit a, chloroplastic.